A 617-amino-acid chain; its full sequence is Serine/threonine-protein phosphatase 2A activator 1 (617 aa).

A compositionally biased stretch (pro residues) spans 1–11; that stretch reads MDPTSKRPPPA. 5 disordered regions span residues 1 to 25, 84 to 169, 230 to 261, 376 to 398, and 572 to 617; these read MDPTSKRPPPAASSSTTYPPLPKLE, VSTS…ESES, GAGGEKKEEEEGTETETETETEGDSDKKTNEQ, SSPNEPTPLEGSVPNAPKPSDIT, and RFTP…PWTK. Over residues 84–93 the composition is skewed to polar residues; sequence VSTSEPTTDG. Residues 94 to 104 show a composition bias toward low complexity; the sequence is QQQQQQQQQRQ. A compositionally biased stretch (acidic residues) spans 239-252; that stretch reads EEGTETETETETEG.

This sequence belongs to the PTPA-type PPIase family.

The protein localises to the cytoplasm. It localises to the nucleus. The enzyme catalyses [protein]-peptidylproline (omega=180) = [protein]-peptidylproline (omega=0). Functionally, PPIases accelerate the folding of proteins. It catalyzes the cis-trans isomerization of proline imidic peptide bonds in oligopeptides. Acts as a regulatory subunit for PP2A-like phosphatases modulating their activity or substrate specificity, probably by inducing a conformational change in the catalytic subunit, a direct target of the PPIase. Can reactivate inactive phosphatase PP2A-phosphatase methylesterase complexes (PP2Ai) in presence of ATP and Mg(2+) by dissociating the inactive form from the complex. The chain is Serine/threonine-protein phosphatase 2A activator 1 (rrd-1) from Neurospora crassa (strain ATCC 24698 / 74-OR23-1A / CBS 708.71 / DSM 1257 / FGSC 987).